An 820-amino-acid chain; its full sequence is Protein bicaudal D homolog 2 (820 aa).

N-acetylserine is present on Ser-2. A coiled-coil region spans residues 20–270; sequence EWLRAEVKRL…LSHYMSINDS (251 aa). The tract at residues 25–400 is interaction with DYNLL1, DYNC1H1, DYNC1I2, DCTN1 and DCTN2; that stretch reads EVKRLSHELA…RLTENLSALR (376 aa). A phosphoserine mark is found at Ser-190, Ser-224, and Ser-320. The segment at 313 to 332 is disordered; that stretch reads SSLDNKTSTPRKDGLAPPSP. Position 321 is a phosphothreonine (Thr-321). The interval 336–595 is interaction with KIF5A; sequence SDLLSELHIS…LLATEVGRAD (260 aa). Residues 340 to 539 adopt a coiled-coil conformation; that stretch reads SELHISEIQK…VTFSEELANL (200 aa). 2 positions are modified to phosphoserine: Ser-345 and Ser-397. Disordered stretches follow at residues 400 to 427, 563 to 582, 591 to 618, and 799 to 820; these read RRLQ…GDYY, QGKA…PVLL, VGRA…DPRR, and HEQT…SPSL. Basic and acidic residues predominate over residues 404 to 424; it reads AGKERQTSLDNEKDRDSHEDG. Phosphoserine occurs at positions 570 and 578. Residues 586 to 820 are interaction with RANBP2; that stretch reads LLATEVGRAD…SKAKPASPSL (235 aa). Thr-598 is modified (phosphothreonine). The span at 602–614 shows a compositional bias: low complexity; the sequence is SPSPSSSLPSPLS. The stretch at 662–804 forms a coiled coil; sequence DKDKEALMEE…LELDHEQTRR (143 aa). Residues 662–810 are interaction with RAB6A; sequence DKDKEALMEE…QTRRGRSKAA (149 aa). Ser-819 carries the phosphoserine modification.

It belongs to the BicD family. Part of a tripartite complex with dynein and dynactin, acts an adapter linking the dynein motor complex and dynactin. Interacts with CPNE4 (via VWFA domain). Interacts with NEK9. Interacts with DCTN2. Interacts with RAB6A. Interacts with DNAI1. Interacts with DYNLL1, DYNC1H1, DYNC1I2 and DCTN1. Forms a complex with dynein and dynactin. The dynein-dynactin-BICD2 ternary complex (DDB) binds preferentially to tyrosinated microtubules than to detyrosinated microtubules. Interacts with RANBP2, RAB6A and KIF5A. Interacts with KIF1C. Post-translationally, phosphorylated by NEK9 in vitro. In terms of tissue distribution, ubiquitously expressed with high expression in the spinal cord.

The protein localises to the golgi apparatus. The protein resides in the cytoplasm. It localises to the cytoskeleton. It is found in the nucleus. Its subcellular location is the nuclear pore complex. The protein localises to the nucleus envelope. In terms of biological role, acts as an adapter protein linking the dynein motor complex to various cargos and converts dynein from a non-processive to a highly processive motor in the presence of dynactin. Facilitates and stabilizes the interaction between dynein and dynactin and activates dynein processivity (the ability to move along a microtubule for a long distance without falling off the track). Facilitates the binding of RAB6A to the Golgi by stabilizing its GTP-bound form. Regulates coat complex coatomer protein I (COPI)-independent Golgi-endoplasmic reticulum transport via its interaction with RAB6A and recruitment of the dynein-dynactin motor complex. Contributes to nuclear and centrosomal positioning prior to mitotic entry through regulation of both dynein and kinesin-1. During G2 phase of the cell cycle, associates with RANBP2 at the nuclear pores and recruits dynein and dynactin to the nuclear envelope to ensure proper positioning of the nucleus relative to centrosomes prior to the onset of mitosis. This Mus musculus (Mouse) protein is Protein bicaudal D homolog 2 (Bicd2).